The following is a 515-amino-acid chain: Maturase K (515 aa).

It belongs to the intron maturase 2 family. MatK subfamily.

It is found in the plastid. The protein localises to the chloroplast. Functionally, usually encoded in the trnK tRNA gene intron. Probably assists in splicing its own and other chloroplast group II introns. The sequence is that of Maturase K from Cedrus atlantica (Atlas cedar).